The primary structure comprises 356 residues: Galectin-9C (356 aa).

The Galectin 1 domain maps to 17 to 148 (FSGTIQGGLQ…SVQLSYISFQ (132 aa)). An a beta-D-galactoside-binding site is contributed by 82-88 (WGPEERK). Residues 170–190 (FPPRPRGRRQKPPSVRPANPA) form a disordered region. Residues 228-356 (FITTIPGGLY…GDIQLTHVQT (129 aa)) form the Galectin 2 domain. 288 to 294 (WGSEERS) lines the a beta-D-galactoside pocket.

In terms of biological role, binds galactosides. The protein is Galectin-9C (LGALS9C) of Homo sapiens (Human).